The sequence spans 342 residues: Phenylalanine--tRNA ligase alpha subunit (342 aa).

E257 contacts Mg(2+).

It belongs to the class-II aminoacyl-tRNA synthetase family. Phe-tRNA synthetase alpha subunit type 1 subfamily. Tetramer of two alpha and two beta subunits. Mg(2+) serves as cofactor.

It localises to the cytoplasm. It carries out the reaction tRNA(Phe) + L-phenylalanine + ATP = L-phenylalanyl-tRNA(Phe) + AMP + diphosphate + H(+). The protein is Phenylalanine--tRNA ligase alpha subunit (pheS) of Chlamydia trachomatis serovar D (strain ATCC VR-885 / DSM 19411 / UW-3/Cx).